The primary structure comprises 250 residues: 3-deoxy-manno-octulosonate cytidylyltransferase (250 aa).

The protein belongs to the KdsB family.

The protein localises to the cytoplasm. It catalyses the reaction 3-deoxy-alpha-D-manno-oct-2-ulosonate + CTP = CMP-3-deoxy-beta-D-manno-octulosonate + diphosphate. It participates in nucleotide-sugar biosynthesis; CMP-3-deoxy-D-manno-octulosonate biosynthesis; CMP-3-deoxy-D-manno-octulosonate from 3-deoxy-D-manno-octulosonate and CTP: step 1/1. The protein operates within bacterial outer membrane biogenesis; lipopolysaccharide biosynthesis. Functionally, activates KDO (a required 8-carbon sugar) for incorporation into bacterial lipopolysaccharide in Gram-negative bacteria. This chain is 3-deoxy-manno-octulosonate cytidylyltransferase, found in Francisella tularensis subsp. novicida (strain U112).